Consider the following 384-residue polypeptide: Glucans biosynthesis protein C (384 aa).

10 consecutive transmembrane segments (helical) span residues 17–37 (AWLMLLGIPFHISLIYSTHSW), 54–74 (FIHAFRMQVFFVISGYFSYML), 91–111 (VGIPMLTAIPLLTLPQFILLQ), 140–160 (LWFLLVLVILTTVSIGIFTWF), 173–193 (AISLVRLSLIFFLLGMAYAAI), 212–232 (FIVMQTLFYVPFFILGALAFI), 240–260 (FTTPSRGCTLGAAVAFIAYLL), 274–294 (TESVITMVMGLWMVNVVFSLG), 311–331 (ASLFIYLVHHPLTLFFGAYIT), and 338–358 (LIGFLCGLIFVMGIALILYEI).

Belongs to the acyltransferase 3 family. OpgC subfamily.

It localises to the cell membrane. It participates in glycan metabolism; osmoregulated periplasmic glucan (OPG) biosynthesis. Its function is as follows. Necessary for the succinyl substitution of periplasmic glucans. Could catalyze the transfer of succinyl residues from the cytoplasmic side of the membrane to the nascent glucan backbones on the periplasmic side of the membrane. The chain is Glucans biosynthesis protein C from Salmonella gallinarum (strain 287/91 / NCTC 13346).